The sequence spans 729 residues: Glutamine synthetase (729 aa).

One can recognise a GS beta-grasp domain in the interval 85-174 (THYTHWFQPL…IPTIFISYTG (90 aa)). The GS catalytic domain maps to 179–615 (YKTPLLKALA…VLGDLAINHI (437 aa)). Mg(2+)-binding residues include Glu-215, Glu-217, Glu-286, and Glu-293. L-glutamate-binding positions include 337–338 (NG) and Gly-338. His-342 is a binding site for Mg(2+). Residues Ser-346 and Arg-458 each contribute to the ATP site. Position 458 (Arg-458) interacts with L-glutamate.

Belongs to the glutamine synthetase family. Homohexamer. Mg(2+) serves as cofactor.

It localises to the cytoplasm. The catalysed reaction is L-glutamate + NH4(+) + ATP = L-glutamine + ADP + phosphate + H(+). With respect to regulation, inhibited by L-histidine (46%), L-arginine (38%) and L-methionine-DL-sulphoximine. The activity of this enzyme is not controlled by adenylation. In terms of biological role, catalyzes the ATP-dependent biosynthesis of glutamine from glutamate and ammonia. This is Glutamine synthetase from Bacteroides fragilis (strain YCH46).